The primary structure comprises 400 residues: Polyadenylate-binding protein-interacting protein 1 (400 aa).

Residues 1–10 are compositionally biased toward basic and acidic residues; sequence MSDSFDRAPE. The tract at residues 1 to 36 is disordered; sequence MSDSFDRAPEQTKPQRAPPSSQDKIPQQNSESAMAK. The span at 12–32 shows a compositional bias: polar residues; sequence TKPQRAPPSSQDKIPQQNSES. The interval 37-64 is PABPC1-interacting motif-2 (PAM2); sequence PQVVVAPVLMSKLSANAPEFYPSGYSSN. Residues 78–296 form a PAIP1 middle domain (PAIP1M) region; that stretch reads TLSEYVQDFL…LLKLVELRSS (219 aa). The MIF4G domain maps to 80-297; that stretch reads SEYVQDFLNH…LKLVELRSSN (218 aa). The interval 356-376 is disordered; it reads DYEENGTDLSGAGDPYLDDID. A PABPC1-interacting motif-1 (PAM1) region spans residues 361-400; that stretch reads GTDLSGAGDPYLDDIDDEMDPEIEEAYEKFCLESERKRKQ.

As to quaternary structure, interacts with the RRM1-RRM2 and C-terminus regions of PABPC1 in a 1:1 stoichiometry. Interacts with EIF4A.

It localises to the cytoplasm. Acts as a coactivator in the regulation of translation initiation of poly(A)-containing mRNAs. Its stimulatory activity on translation is mediated via its action on PABPC1. Competes with PAIP2 for binding to PABPC1. Its association with EIF4A and PABPC1 may potentiate contacts between mRNA termini. May also be involved in translationally coupled mRNA turnover. Implicated with other RNA-binding proteins in the cytoplasmic deadenylation/translational and decay interplay of the FOS mRNA mediated by the major coding-region determinant of instability (mCRD) domain. The polypeptide is Polyadenylate-binding protein-interacting protein 1 (Paip1) (Mus musculus (Mouse)).